The chain runs to 934 residues: uncharacterized protein (934 aa).

The signal sequence occupies residues 1 to 24 (MKLKKRYLLLGSTLTVSAALILSA). The N-palmitoyl cysteine moiety is linked to residue Cys-25. The S-diacylglycerol cysteine moiety is linked to residue Cys-25. Residues 111–131 (SGLKGRAQKNGSTDSSDGSSK) form a disordered region. Residues 119-131 (KNGSTDSSDGSSK) show a composition bias toward polar residues.

It localises to the cell membrane. This is an uncharacterized protein from Mycoplasma genitalium (strain ATCC 33530 / DSM 19775 / NCTC 10195 / G37) (Mycoplasmoides genitalium).